We begin with the raw amino-acid sequence, 1064 residues long: Rab GTPase-activating protein 1 (1064 aa).

Residues 1–101 (MDDKASVGKI…SNQLSASSTI (101 aa)) are disordered. Positions 7–22 (VGKISVSSDSVSTLNS) are enriched in low complexity. Phosphoserine is present on S42. The segment covering 91–101 (LSNQLSASSTI) has biased composition (polar residues). Residues 137–293 (EDSVVFNKLT…IFTFSVSLEI (157 aa)) form the PID domain. Position 355 is a phosphoserine (S355). The interval 478 to 520 (RERRKTTASPSVRLPQSGSQSSMIPSPPEDDEEEDNDEPLLSG) is disordered. Positions 484-501 (TASPSVRLPQSGSQSSMI) are enriched in polar residues. Positions 505-515 (PEDDEEEDNDE) are enriched in acidic residues. Positions 561–747 (GVPEALRGEV…HIIDLLLCEG (187 aa)) constitute a Rab-GAP TBC domain. The stretch at 805–1038 (SQKKLKKFEK…HLGLALSEVQ (234 aa)) forms a coiled coil. Phosphothreonine is present on T991.

As to quaternary structure, interacts with RAB6A and tubulin gamma.

The protein localises to the cytoplasm. It is found in the cytosol. The protein resides in the cytoskeleton. Its subcellular location is the microtubule organizing center. It localises to the centrosome. May act as a GTPase-activating protein of RAB6A. May play a role in microtubule nucleation by centrosome. May participate in a RAB6A-mediated pathway involved in the metaphase-anaphase transition. In Mus musculus (Mouse), this protein is Rab GTPase-activating protein 1.